Reading from the N-terminus, the 110-residue chain is Ribonuclease P protein component (110 aa).

It belongs to the RnpA family. As to quaternary structure, consists of a catalytic RNA component (M1 or rnpB) and a protein subunit.

It catalyses the reaction Endonucleolytic cleavage of RNA, removing 5'-extranucleotides from tRNA precursor.. Functionally, RNaseP catalyzes the removal of the 5'-leader sequence from pre-tRNA to produce the mature 5'-terminus. It can also cleave other RNA substrates such as 4.5S RNA. The protein component plays an auxiliary but essential role in vivo by binding to the 5'-leader sequence and broadening the substrate specificity of the ribozyme. This is Ribonuclease P protein component from Mesoplasma florum (strain ATCC 33453 / NBRC 100688 / NCTC 11704 / L1) (Acholeplasma florum).